Here is a 262-residue protein sequence, read N- to C-terminus: Acyl-[acyl-carrier-protein]--UDP-N-acetylglucosamine O-acyltransferase (262 aa).

It belongs to the transferase hexapeptide repeat family. LpxA subfamily. As to quaternary structure, homotrimer.

It localises to the cytoplasm. The catalysed reaction is a (3R)-hydroxyacyl-[ACP] + UDP-N-acetyl-alpha-D-glucosamine = a UDP-3-O-[(3R)-3-hydroxyacyl]-N-acetyl-alpha-D-glucosamine + holo-[ACP]. It functions in the pathway glycolipid biosynthesis; lipid IV(A) biosynthesis; lipid IV(A) from (3R)-3-hydroxytetradecanoyl-[acyl-carrier-protein] and UDP-N-acetyl-alpha-D-glucosamine: step 1/6. In terms of biological role, involved in the biosynthesis of lipid A, a phosphorylated glycolipid that anchors the lipopolysaccharide to the outer membrane of the cell. The sequence is that of Acyl-[acyl-carrier-protein]--UDP-N-acetylglucosamine O-acyltransferase from Paraburkholderia phymatum (strain DSM 17167 / CIP 108236 / LMG 21445 / STM815) (Burkholderia phymatum).